A 300-amino-acid polypeptide reads, in one-letter code: Probable membrane transporter protein YtnM (300 aa).

8 consecutive transmembrane segments (helical) span residues 4–24 (LIVF…LGMA), 33–53 (LLAF…AEVV), 76–96 (LVIP…QLPG), 102–122 (YISL…LFQY), 139–159 (IPLG…WGPV), 206–226 (LWVF…AWLV), 231–251 (PQLM…RTLI), and 260–280 (VHPL…LFVL).

It belongs to the 4-toluene sulfonate uptake permease (TSUP) (TC 2.A.102) family.

It localises to the cell membrane. This Bacillus subtilis (strain 168) protein is Probable membrane transporter protein YtnM (ytnM).